Consider the following 163-residue polypeptide: Disulfide bond formation protein B (163 aa).

The Cytoplasmic segment spans residues Met1–Leu9. A helical transmembrane segment spans residues Phe10–Tyr26. The Periplasmic segment spans residues Met27 to Ile44. A disulfide bridge connects residues Cys36 and Cys39. A helical transmembrane segment spans residues Cys45–Pro61. Residues Ala62–Arg67 lie on the Cytoplasmic side of the membrane. The helical transmembrane segment at Val68–Ile85 threads the bilayer. The Periplasmic portion of the chain corresponds to Arg86–Glu142. Cysteines 101 and 128 form a disulfide. Residues Trp143–Arg161 traverse the membrane as a helical segment. Topologically, residues Arg162–Asp163 are cytoplasmic.

This sequence belongs to the DsbB family.

It localises to the cell inner membrane. Its function is as follows. Required for disulfide bond formation in some periplasmic proteins. Acts by oxidizing the DsbA protein. The sequence is that of Disulfide bond formation protein B from Stutzerimonas stutzeri (strain A1501) (Pseudomonas stutzeri).